The chain runs to 269 residues: Subtilisin Savinase (269 aa).

Residue Gln2 coordinates Ca(2+). Residues 5 to 268 (PWGISRVQAP…SGLVNAEAAT (264 aa)) enclose the Peptidase S8 domain. Asp32 functions as the Charge relay system in the catalytic mechanism. Asp40 lines the Ca(2+) pocket. Catalysis depends on His62, which acts as the Charge relay system. Leu73, Asn75, Ile77, Val79, Ala163, Tyr165, and Ala168 together coordinate Ca(2+). Ser215 (charge relay system) is an active-site residue.

Belongs to the peptidase S8 family. Ca(2+) is required as a cofactor.

It is found in the secreted. The catalysed reaction is Hydrolysis of proteins with broad specificity for peptide bonds, and a preference for a large uncharged residue in P1. Hydrolyzes peptide amides.. Functionally, subtilisin is an extracellular alkaline serine protease, it catalyzes the hydrolysis of proteins and peptide amides. In Lederbergia lenta (Bacillus lentus), this protein is Subtilisin Savinase.